A 371-amino-acid chain; its full sequence is MGLLSKKLLVASMVAAVLAVAAVELCSAIPMEDKDLESEEALWDLYERWQSAHRVRRHHAEKHRRFGTFKSNAHFIHSHNKRGDHPYRLHLNRFGDMDQAEFRATFVGDLRRDTPAKPPSVPGFMYAALNVSDLPPSVDWRQKGAVTGVKDQGKCGSCWAFSTVVSVEGINAIRTGSLVSLSEQELIDCDTADNDGCQGGLMDNAFEYIKNNGGLITEAAYPYRAARGTCNVARAAQNSPVVVHIDGHQDVPANSEEDLARAVANQPVSVAVEASGKAFMFYSEGVFTGDCGTELDHGVAVVGYGVAEDGKAYWTVKNSWGPSWGEQGYIRVEKDSGASGGLCGIAMEASYPVKTYNKPMPRRALGAWESQ.

An N-terminal signal peptide occupies residues 1–28 (MGLLSKKLLVASMVAAVLAVAAVELCSA). A propeptide spans 29–133 (IPMEDKDLES…FMYAALNVSD (105 aa)) (activation peptide). Asparagine 130 carries N-linked (GlcNAc...) asparagine glycosylation. 3 cysteine pairs are disulfide-bonded: cysteine 155–cysteine 197, cysteine 189–cysteine 230, and cysteine 291–cysteine 343. Cysteine 158 is an active-site residue. Active-site residues include histidine 297 and asparagine 318.

The protein belongs to the peptidase C1 family.

This chain is Cysteine proteinase EP-B 1, found in Hordeum vulgare (Barley).